The sequence spans 176 residues: Tail tube terminator protein (176 aa).

As to quaternary structure, homohexamer. Interacts with completion protein gp15.

It localises to the virion. Its function is as follows. Plays an essential role in tail assembly by capping the rapidly polymerizing tail once it has reached its requisite length and serving as the interaction surface for the completion protein. This is Tail tube terminator protein (3) from Escherichia coli (Bacteriophage T4).